We begin with the raw amino-acid sequence, 436 residues long: MDVVDSLLMNGSNITPPCELGLENETLFCLDQPQPSKEWQSAVQILLYSFIFLLSVLGNTLVITVLIRNKRMRTVTNIFLLSLAVSDLMLCLFCMPFNLIPNLLKDFIFGSAVCKTTTYFMGTSVSVSTFNLVAISLERYGAICRPLQSRVWQTKSHALKVIAATWCLSFTIMTPYPIYSNLVPFTKNNNQTANMCRFLLPSDAMQQSWQTFLLLILFLIPGVVMVVAYGLISLELYQGIKFDASQKKSAKEKRLSSGGGGGGGSSSSRYEDSDGCYLQKSRPPRKLELQQLSTSSSGGRINRIRSSGSAANLIAKKRVIRMLIVIVVLFFLCWMPIFSANAWRAYDTVSAEKHLSGTPISFILLLSYTSSCVNPIIYCFMNKRFRLGFMATFPCCPNPGPTGVRGEVGEEEDGRTIRASLSRYSYSHMSTSAPPH.

Residues 1-41 (MDVVDSLLMNGSNITPPCELGLENETLFCLDQPQPSKEWQS) are Extracellular-facing. 2 N-linked (GlcNAc...) asparagine glycosylation sites follow: N10 and N24. An intrachain disulfide couples C18 to C29. A helical membrane pass occupies residues 42–67 (AVQILLYSFIFLLSVLGNTLVITVLI). Over 68–77 (RNKRMRTVTN) the chain is Cytoplasmic. Residues 78-104 (IFLLSLAVSDLMLCLFCMPFNLIPNLL) traverse the membrane as a helical segment. The Extracellular segment spans residues 105–115 (KDFIFGSAVCK). Residues C114 and C196 are joined by a disulfide bond. The helical transmembrane segment at 116–137 (TTTYFMGTSVSVSTFNLVAISL) threads the bilayer. Topologically, residues 138–157 (ERYGAICRPLQSRVWQTKSH) are cytoplasmic. The helical transmembrane segment at 158–178 (ALKVIAATWCLSFTIMTPYPI) threads the bilayer. Residues 179-210 (YSNLVPFTKNNNQTANMCRFLLPSDAMQQSWQ) lie on the Extracellular side of the membrane. N190 is a glycosylation site (N-linked (GlcNAc...) asparagine). Residues 211–234 (TFLLLILFLIPGVVMVVAYGLISL) traverse the membrane as a helical segment. At 235–321 (ELYQGIKFDA…NLIAKKRVIR (87 aa)) the chain is on the cytoplasmic side. Residues 252-280 (EKRLSSGGGGGGGSSSSRYEDSDGCYLQK) form a disordered region. Residues 322–342 (MLIVIVVLFFLCWMPIFSANA) form a helical membrane-spanning segment. Residues 343–357 (WRAYDTVSAEKHLSG) are Extracellular-facing. Residues 358-381 (TPISFILLLSYTSSCVNPIIYCFM) form a helical membrane-spanning segment. Over 382 to 436 (NKRFRLGFMATFPCCPNPGPTGVRGEVGEEEDGRTIRASLSRYSYSHMSTSAPPH) the chain is Cytoplasmic. Residue C395 is the site of S-palmitoyl cysteine attachment.

This sequence belongs to the G-protein coupled receptor 1 family.

It localises to the cell membrane. Receptor for cholecystokinin. Mediates pancreatic growth and enzyme secretion, smooth muscle contraction of the gall bladder and stomach. Has a 1000-fold higher affinity for CCK rather than for gastrin. It modulates feeding and dopamine-induced behavior in the central and peripheral nervous system. This receptor mediates its action by association with G proteins that activate a phosphatidylinositol-calcium second messenger system. In Mus musculus (Mouse), this protein is Cholecystokinin receptor type A (Cckar).